The primary structure comprises 338 residues: Glyceraldehyde-3-phosphate dehydrogenase GAPC2, cytosolic (338 aa).

Residues 15–16 (RI), D37, and R84 contribute to the NAD(+) site. D-glyceraldehyde 3-phosphate is bound at residue 155–157 (SCT). Catalysis depends on C156, which acts as the Nucleophile. Position 156 is an S-glutathionyl cysteine; transient; alternate (C156). At C156 the chain carries S-nitrosocysteine; transient; alternate. S-nitrosocysteine; transient is present on C160. Residues T186, 215–216 (TG), and R238 each bind D-glyceraldehyde 3-phosphate. N320 serves as a coordination point for NAD(+).

This sequence belongs to the glyceraldehyde-3-phosphate dehydrogenase family. In terms of assembly, homotetramer. Interacts with PLDDELTA. Binds to DPB3-1/NF-YC10 in response to heat-stress; this interaction promotes DPB3-1/NF-YC10 DNA-binding ability to its target promoter. S-glutathionylation at Cys-156 in the presence of oxidized glutathione (GSSG). S-nitrosylation at Cys-156 and Cys-160 in the presence of S-nitrosoglutathione (GSNO) or sodium nitroprusside (SNP). These reactions may be both a protective mechanism against irreversible oxidation and a mean to store inhibited enzyme in a recoverable form.

The protein localises to the cytoplasm. The protein resides in the nucleus. The catalysed reaction is D-glyceraldehyde 3-phosphate + phosphate + NAD(+) = (2R)-3-phospho-glyceroyl phosphate + NADH + H(+). The protein operates within carbohydrate degradation; glycolysis; pyruvate from D-glyceraldehyde 3-phosphate: step 1/5. With respect to regulation, inhibition by oxidized glutathione (GSSG), S-nitrosoglutathione (GSNO) and hydrogen peroxide. Functionally, key enzyme in glycolysis that catalyzes the first step of the pathway by converting D-glyceraldehyde 3-phosphate (G3P) into 3-phospho-D-glyceroyl phosphate. Essential for the maintenance of cellular ATP levels and carbohydrate metabolism. Binds DNA in vitro. Together with DNA polymerase II subunit B3-1 (DPB3-1) and GAPC1, enhances heat tolerance and promotes the expression of heat-inducible genes. The chain is Glyceraldehyde-3-phosphate dehydrogenase GAPC2, cytosolic from Arabidopsis thaliana (Mouse-ear cress).